The chain runs to 149 residues: Protein SprT-like (149 aa).

The region spanning 6–147 is the SprT-like domain; the sequence is LQKLTEDISL…CGKCRGKIKR (142 aa). A Zn(2+)-binding site is contributed by H67. E68 is a catalytic residue. H71 contributes to the Zn(2+) binding site.

The protein belongs to the SprT family. The cofactor is Zn(2+).

The protein localises to the cytoplasm. This Bacillus velezensis (strain DSM 23117 / BGSC 10A6 / LMG 26770 / FZB42) (Bacillus amyloliquefaciens subsp. plantarum) protein is Protein SprT-like.